Here is a 391-residue protein sequence, read N- to C-terminus: Tryptophan synthase beta chain 2 (391 aa).

Lys-83 is subject to N6-(pyridoxal phosphate)lysine.

This sequence belongs to the TrpB family. As to quaternary structure, tetramer of two alpha and two beta chains. It depends on pyridoxal 5'-phosphate as a cofactor.

It catalyses the reaction (1S,2R)-1-C-(indol-3-yl)glycerol 3-phosphate + L-serine = D-glyceraldehyde 3-phosphate + L-tryptophan + H2O. It functions in the pathway amino-acid biosynthesis; L-tryptophan biosynthesis; L-tryptophan from chorismate: step 5/5. In terms of biological role, the beta subunit is responsible for the synthesis of L-tryptophan from indole and L-serine. This is Tryptophan synthase beta chain 2 (trpB2) from Chlamydia caviae (strain ATCC VR-813 / DSM 19441 / 03DC25 / GPIC) (Chlamydophila caviae).